Reading from the N-terminus, the 372-residue chain is Small ribosomal subunit protein mS77 (rPPR2) (372 aa).

A mitochondrion-targeting transit peptide spans 1–28 (MKSFLLSRQAIHRISLLSSKTPTFCRNF). The interval 240-265 (DNSIRESETVDGEVEEEGFVPSDEVE) is disordered. The segment covering 248–257 (TVDGEVEEEG) has biased composition (acidic residues).

In terms of assembly, component of the mitochondrial ribosome small subunit.

It localises to the mitochondrion. Its function is as follows. Required for karyogamy during female gametophyte development, when the two polar nuclei fuse to form the diploid central cell nucleus. In Arabidopsis thaliana (Mouse-ear cress), this protein is Small ribosomal subunit protein mS77 (rPPR2).